Reading from the N-terminus, the 146-residue chain is Regulator of ribonuclease activity B (146 aa).

The disordered stretch occupies residues 110–146 (WGTYFEDPDGEEEEGDEFDQDDEDGPADRDEVPATRH). The segment covering 115–134 (EDPDGEEEEGDEFDQDDEDG) has biased composition (acidic residues). Residues 135 to 146 (PADRDEVPATRH) show a composition bias toward basic and acidic residues.

The protein belongs to the RraB family. In terms of assembly, interacts with the C-terminal region of Rne.

It is found in the cytoplasm. Functionally, globally modulates RNA abundance by binding to RNase E (Rne) and regulating its endonucleolytic activity. Can modulate Rne action in a substrate-dependent manner by altering the composition of the degradosome. This is Regulator of ribonuclease activity B from Sodalis glossinidius (strain morsitans).